The following is a 204-amino-acid chain: Somatotropin (204 aa).

Residues 1 to 17 (MNSVVLLLSVVCLGVSS) form the signal peptide. Q18 bears the Pyrrolidone carboxylic acid mark. Residue H36 coordinates Zn(2+). Cysteines 69 and 177 form a disulfide. E186 contacts Zn(2+). C194 and C202 are joined by a disulfide.

This sequence belongs to the somatotropin/prolactin family.

It localises to the secreted. In terms of biological role, growth hormone plays an important role in growth control and involved in the regulation of several anabolic processes. This Oreochromis niloticus (Nile tilapia) protein is Somatotropin (gh).